Here is a 186-residue protein sequence, read N- to C-terminus: UPF0340 protein M6_Spy1622 (186 aa).

It belongs to the UPF0340 family.

The protein is UPF0340 protein M6_Spy1622 of Streptococcus pyogenes serotype M6 (strain ATCC BAA-946 / MGAS10394).